The primary structure comprises 196 residues: Adenylate kinase (196 aa).

An ATP-binding site is contributed by 9 to 17 (GIPGVGKST).

This sequence belongs to the archaeal adenylate kinase family.

The protein resides in the cytoplasm. It catalyses the reaction AMP + ATP = 2 ADP. This is Adenylate kinase from Thermococcus onnurineus (strain NA1).